The chain runs to 417 residues: Mitochondrial tRNA-specific 2-thiouridylase 1 (417 aa).

ATP is bound by residues 32-39 (AMSSGVDS) and methionine 58. An interaction with target base in tRNA region spans residues 122-124 (NPD). Catalysis depends on cysteine 127, which acts as the Nucleophile. An intrachain disulfide couples cysteine 127 to cysteine 229. Residue glycine 154 coordinates ATP. Residues 179–181 (KDQ) form an interaction with tRNA region. Cysteine 229 serves as the catalytic Cysteine persulfide intermediate. The segment at 354–355 (RS) is interaction with tRNA.

It belongs to the MnmA/TRMU family.

It localises to the mitochondrion. It catalyses the reaction 5-taurinomethyluridine(34) in tRNA + S-sulfanyl-L-cysteinyl-[protein] + AH2 + ATP = 5-taurinomethyl-2-thiouridine(34) in tRNA + L-cysteinyl-[protein] + A + AMP + diphosphate + H(+). In terms of biological role, catalyzes the 2-thiolation of uridine at the wobble position (U34) of mitochondrial tRNA(Lys), tRNA(Glu) and tRNA(Gln). Required for the formation of 5-taurinomethyl-2-thiouridine (tm5s2U) of mitochondrial tRNA(Lys), tRNA(Glu), and tRNA(Gln) at the wobble position. ATP is required to activate the C2 atom of the wobble base. This is Mitochondrial tRNA-specific 2-thiouridylase 1 (SLM3) from Saccharomyces cerevisiae (strain ATCC 204508 / S288c) (Baker's yeast).